The chain runs to 116 residues: Putative pterin-4-alpha-carbinolamine dehydratase (116 aa).

This sequence belongs to the pterin-4-alpha-carbinolamine dehydratase family.

It carries out the reaction (4aS,6R)-4a-hydroxy-L-erythro-5,6,7,8-tetrahydrobiopterin = (6R)-L-erythro-6,7-dihydrobiopterin + H2O. This chain is Putative pterin-4-alpha-carbinolamine dehydratase, found in Paracidovorax citrulli (strain AAC00-1) (Acidovorax citrulli).